The following is a 152-amino-acid chain: Ribosome maturation factor RimP (152 aa).

This sequence belongs to the RimP family.

It localises to the cytoplasm. Its function is as follows. Required for maturation of 30S ribosomal subunits. In Erwinia tasmaniensis (strain DSM 17950 / CFBP 7177 / CIP 109463 / NCPPB 4357 / Et1/99), this protein is Ribosome maturation factor RimP.